Reading from the N-terminus, the 119-residue chain is Flagellar transcriptional regulator FlhD (119 aa).

It belongs to the FlhD family. In terms of assembly, homodimer; disulfide-linked. Forms a heterohexamer composed of two FlhC and four FlhD subunits. Each FlhC binds a FlhD dimer, forming a heterotrimer, and a hexamer assembles by dimerization of two heterotrimers.

The protein resides in the cytoplasm. In terms of biological role, functions in complex with FlhC as a master transcriptional regulator that regulates transcription of several flagellar and non-flagellar operons by binding to their promoter region. Activates expression of class 2 flagellar genes, including fliA, which is a flagellum-specific sigma factor that turns on the class 3 genes. Also regulates genes whose products function in a variety of physiological pathways. This Pectobacterium atrosepticum (strain SCRI 1043 / ATCC BAA-672) (Erwinia carotovora subsp. atroseptica) protein is Flagellar transcriptional regulator FlhD.